Reading from the N-terminus, the 520-residue chain is 2-isopropylmalate synthase (520 aa).

The 263-residue stretch at 5–267 folds into the Pyruvate carboxyltransferase domain; the sequence is VIIFDTTLRD…YTNINHQEIY (263 aa). Residues Asp-14, His-202, His-204, and Asn-238 each coordinate Mn(2+). Positions 392–520 are regulatory domain; it reads HLDNFNIQSG…RIQQNTKEMV (129 aa).

It belongs to the alpha-IPM synthase/homocitrate synthase family. LeuA type 1 subfamily. As to quaternary structure, homodimer. Requires Mn(2+) as cofactor.

The protein localises to the cytoplasm. It catalyses the reaction 3-methyl-2-oxobutanoate + acetyl-CoA + H2O = (2S)-2-isopropylmalate + CoA + H(+). It participates in amino-acid biosynthesis; L-leucine biosynthesis; L-leucine from 3-methyl-2-oxobutanoate: step 1/4. Functionally, catalyzes the condensation of the acetyl group of acetyl-CoA with 3-methyl-2-oxobutanoate (2-ketoisovalerate) to form 3-carboxy-3-hydroxy-4-methylpentanoate (2-isopropylmalate). The protein is 2-isopropylmalate synthase of Photorhabdus laumondii subsp. laumondii (strain DSM 15139 / CIP 105565 / TT01) (Photorhabdus luminescens subsp. laumondii).